The sequence spans 1150 residues: Serine/threonine-protein phosphatase 2A regulatory subunit B'' subunit alpha (1150 aa).

Residues 661–693 form a disordered region; sequence PEVIKIQNKPEKKPGTPLPPPATSPSSPRPLSP. Residues 676 to 693 show a composition bias toward pro residues; that stretch reads TPLPPPATSPSSPRPLSP. EF-hand domains lie at 758-793 and 972-1007; these read CPLYWKAPMFRAAGGEKTGFVTAQSFIAMWRKLLNN and RNPTSIEYWFRCMDVDGDGVLSMYELEYFYEEQCER. Ca(2+)-binding residues include Asp-985, Asp-987, Asp-989, and Glu-996. A disordered region spans residues 1105 to 1132; that stretch reads AQFQEGFEDYETDEPASPSEFGNKSNKI.

In terms of assembly, PP2A consists of a common heterodimeric core enzyme, composed of a 36 kDa catalytic subunit (subunit C) and a 65 kDa constant regulatory subunit (PR65 or subunit A), that associates with a variety of regulatory subunits. Proteins that associate with the core dimer include three families of regulatory subunits B (the R2/B/PR55/B55, R3/B''/PR72/PR130/PR59 and R5/B'/B56 families), the 48 kDa variable regulatory subunit, viral proteins, and cell signaling molecules. Expressed in heart, brain, placenta, lung, muscle and kidney.

The B regulatory subunit might modulate substrate selectivity and catalytic activity, and might also direct the localization of the catalytic enzyme to a particular subcellular compartment. The protein is Serine/threonine-protein phosphatase 2A regulatory subunit B'' subunit alpha (PPP2R3A) of Homo sapiens (Human).